A 334-amino-acid polypeptide reads, in one-letter code: Spermidine synthase 1 (334 aa).

A compositionally biased stretch (basic and acidic residues) spans 1–16 (MDAKETSATDLKRPRE). The interval 1 to 35 (MDAKETSATDLKRPREEDDNGGAATMETENGDQKK) is disordered. The 238-residue stretch at 45–282 (PGWFSEMSPM…GVIGFMLCST (238 aa)) folds into the PABS domain. Q76 contributes to the S-adenosyl 3-(methylsulfanyl)propylamine binding site. Y106 lines the putrescine pocket. Residues Q107, D131, E151, 182–183 (DG), and D201 each bind S-adenosyl 3-(methylsulfanyl)propylamine. Residue D201 is the Proton acceptor of the active site. Putrescine contacts are provided by residues 201–204 (DSSD) and Y270.

This sequence belongs to the spermidine/spermine synthase family. Homotetramer and heterodimer. Component of a multiprotein complex. Interacts with SPMS and SPDSYN2.

The enzyme catalyses S-adenosyl 3-(methylsulfanyl)propylamine + putrescine = S-methyl-5'-thioadenosine + spermidine + H(+). It functions in the pathway amine and polyamine biosynthesis; spermidine biosynthesis; spermidine from putrescine: step 1/1. The polypeptide is Spermidine synthase 1 (SPDSYN1) (Arabidopsis thaliana (Mouse-ear cress)).